We begin with the raw amino-acid sequence, 823 residues long: Protein ROOT HAIR DEFECTIVE 3 homolog 2 (823 aa).

At 1 to 688 the chain is on the cytoplasmic side; sequence MEVPISGGGG…EAHRRSNNWL (688 aa). Residues 45–260 form the GB1/RHD3-type G domain; that stretch reads GLSYAVVSIV…IAPGGLAADR (216 aa). 55 to 62 is a binding site for GTP; it reads GPQGSGKS. Positions 226 to 246 form a coiled coil; the sequence is LSSYEEKENLFKEQVGQLRQR. The chain crosses the membrane as a helical span at residues 689 to 709; that stretch reads PPAWTVLLLAILGYNEFIFLL. Residues 710-712 are Lumenal-facing; it reads RNP. The helical transmembrane segment at 713 to 733 threads the bilayer; sequence LYLLGLFVAFVVSYAAWLQYD. The Cytoplasmic portion of the chain corresponds to 734-823; that stretch reads ITAYFRHGTL…SVGSNSDDES (90 aa). Positions 770 to 823 are disordered; that stretch reads NQKSSSHPPRHRPPLHPQSFRNQAQQQSQAQVQYQAPSSLSSSSSVGSNSDDES. The segment covering 786–823 has biased composition (low complexity); it reads PQSFRNQAQQQSQAQVQYQAPSSLSSSSSVGSNSDDES.

The protein belongs to the TRAFAC class dynamin-like GTPase superfamily. GB1/RHD3 GTPase family. RHD3 subfamily.

The protein localises to the endoplasmic reticulum membrane. Its function is as follows. Probable GTP-binding protein that may be involved in cell development. The polypeptide is Protein ROOT HAIR DEFECTIVE 3 homolog 2 (Oryza sativa subsp. japonica (Rice)).